Reading from the N-terminus, the 161-residue chain is HMG1/2-like protein (161 aa).

3 disordered regions span residues 1 to 46, 60 to 91, and 113 to 161; these read MKGA…KRAP, FKQK…EKAP, and GESA…DDDE. Composition is skewed to basic and acidic residues over residues 10–27 and 77–89; these read AKAD…EKPA and AGER…ESEK. The segment at residues 42–111 is a DNA-binding region (HMG box); that stretch reads PKRAPSAFFV…EYNKAIAAYN (70 aa). The span at 114–123 shows a compositional bias: low complexity; sequence ESAAAAAPKK. Over residues 145–161 the composition is skewed to acidic residues; sequence NDDDDDEGSDEDEDDDE.

This sequence belongs to the HMGB family.

Its subcellular location is the nucleus. The protein is HMG1/2-like protein of Triticum aestivum (Wheat).